We begin with the raw amino-acid sequence, 271 residues long: Large ribosomal subunit protein uL3c (271 aa).

The transit peptide at 1–49 directs the protein to the chloroplast; it reads MAIAMAVVSFPSLLNKTTLSSSLFTPTFLPAKSSSLLIKSSPKTRFVVS. The disordered stretch occupies residues 190–222; it reads HGSKSHRALGSIGAGTTPGRVYKGKKMPGRMGG.

The protein belongs to the universal ribosomal protein uL3 family. In terms of assembly, part of the 50S ribosomal subunit.

It localises to the plastid. The protein resides in the chloroplast. Its function is as follows. One of the primary rRNA binding proteins, it binds directly near the 3'-end of the 23S rRNA, where it nucleates assembly of the 50S subunit. This Arabidopsis thaliana (Mouse-ear cress) protein is Large ribosomal subunit protein uL3c (RPL3A).